The primary structure comprises 325 residues: Bifunctional nuclease 1 (325 aa).

Positions 117–252 (CVHNNPQGGH…YLAYSDGMRV (136 aa)) constitute a BFN domain. Residues 284–318 (TKEFNILSKMMQAVDEERYDEAAEWRDKLGQFRAK) enclose the UVR domain.

This sequence belongs to the bifunctional nuclease family.

The protein localises to the nucleus. In terms of biological role, bifunctional nuclease with both RNase and DNase activities. Involved in basal defense response. Participates in abscisic acid-derived callose deposition following infection by a necrotrophic pathogen. The sequence is that of Bifunctional nuclease 1 (BBD1) from Arabidopsis thaliana (Mouse-ear cress).